Consider the following 126-residue polypeptide: Aspartate 1-decarboxylase (126 aa).

Catalysis depends on Ser25, which acts as the Schiff-base intermediate with substrate; via pyruvic acid. Pyruvic acid (Ser) is present on Ser25. Thr57 contacts substrate. Tyr58 acts as the Proton donor in catalysis. 72 to 74 (GAA) is a binding site for substrate.

This sequence belongs to the PanD family. Heterooctamer of four alpha and four beta subunits. Pyruvate is required as a cofactor. Is synthesized initially as an inactive proenzyme, which is activated by self-cleavage at a specific serine bond to produce a beta-subunit with a hydroxyl group at its C-terminus and an alpha-subunit with a pyruvoyl group at its N-terminus.

It localises to the cytoplasm. The catalysed reaction is L-aspartate + H(+) = beta-alanine + CO2. The protein operates within cofactor biosynthesis; (R)-pantothenate biosynthesis; beta-alanine from L-aspartate: step 1/1. Functionally, catalyzes the pyruvoyl-dependent decarboxylation of aspartate to produce beta-alanine. The protein is Aspartate 1-decarboxylase of Campylobacter jejuni subsp. jejuni serotype O:23/36 (strain 81-176).